We begin with the raw amino-acid sequence, 130 residues long: Inner membrane protein YqjF (130 aa).

At 1–5 the chain is on the cytoplasmic side; that stretch reads MKKLE. A helical membrane pass occupies residues 6–26; that stretch reads DVGVLVARILMPILFITAGWG. Topologically, residues 27-45 are periplasmic; it reads KITGYAGTQQYMEAMGVPG. A helical transmembrane segment spans residues 46-66; sequence FMLPLVILLEFGGGLAILFGF. The Cytoplasmic portion of the chain corresponds to 67–70; that stretch reads LTRT. The chain crosses the membrane as a helical span at residues 71 to 91; that stretch reads TALFTAGFTLLTAFLFHSNFA. The Periplasmic segment spans residues 92-101; the sequence is EGVNSLMFMK. The helical transmembrane segment at 102 to 122 threads the bilayer; that stretch reads NLTISGGFLLLAITGPGAYSI. Over 123-130 the chain is Cytoplasmic; the sequence is DRLLNKKW.

This sequence belongs to the DoxX family.

It localises to the cell inner membrane. This Escherichia coli (strain K12) protein is Inner membrane protein YqjF (yqjF).